A 32-amino-acid polypeptide reads, in one-letter code: Cytochrome b6-f complex subunit 7 (32 aa).

The chain crosses the membrane as a helical span at residues 9–29 (AILSSVLVLVGLAVGFLLLKV).

It belongs to the PetM family. As to quaternary structure, the 4 large subunits of the cytochrome b6-f complex are cytochrome b6, subunit IV (17 kDa polypeptide, PetD), cytochrome f and the Rieske protein, while the 4 small subunits are PetG, PetL, PetM and PetN. The complex functions as a dimer.

It localises to the plastid. The protein localises to the chloroplast thylakoid membrane. Functionally, component of the cytochrome b6-f complex, which mediates electron transfer between photosystem II (PSII) and photosystem I (PSI), cyclic electron flow around PSI, and state transitions. This chain is Cytochrome b6-f complex subunit 7, found in Porphyra purpurea (Red seaweed).